A 253-amino-acid chain; its full sequence is Kallikrein-7 (253 aa).

Residues 1–22 form the signal peptide; the sequence is MARSLLLPLQILLLSLALETAG. The propeptide at 23–29 is activation peptide; sequence EEAQGDK. The Peptidase S1 domain occupies 30–250; the sequence is IIDGAPCARG…FTKWINDTMK (221 aa). 6 cysteine pairs are disulfide-bonded: Cys36-Cys165, Cys55-Cys71, Cys137-Cys239, Cys144-Cys211, Cys176-Cys190, and Cys201-Cys226. Catalysis depends on charge relay system residues His70 and Asp112. Residue Ser205 is the Charge relay system of the active site. Asn246 is a glycosylation site (N-linked (GlcNAc...) asparagine).

It belongs to the peptidase S1 family. Kallikrein subfamily. In terms of tissue distribution, abundantly expressed in the skin and is expressed by keratinocytes in the epidermis. Also expressed in the brain, mammary gland, cerebellum, spinal cord and kidney. Lower levels in salivary glands, uterus, thymus, thyroid, placenta, trachea and testis. Up-regulated in ovarian carcinoma, especially late-stage serous carcinoma, compared with normal ovaries and benign adenomas (at protein level).

The protein resides in the secreted. It carries out the reaction Cleavage of proteins with aromatic side chains in the P1 position.. Its activity is regulated as follows. Inhibited by Zn2+ and Cu2+ at low micromolar concentrations. Inhibited by SERPINA12. Its function is as follows. May catalyze the degradation of intercellular cohesive structures in the cornified layer of the skin in the continuous shedding of cells from the skin surface. Specific for amino acid residues with aromatic side chains in the P1 position. Cleaves insulin A chain at '14-Tyr-|-Gln-15' and insulin B chain at '6-Leu-|-Cys-7', '16-Tyr-|-Leu-17', '25-Phe-|-Tyr-26' and '26-Tyr-|-Thr-27'. Could play a role in the activation of precursors to inflammatory cytokines. In Homo sapiens (Human), this protein is Kallikrein-7 (KLK7).